Here is a 177-residue protein sequence, read N- to C-terminus: B-phycoerythrin beta chain (177 aa).

Cysteine 50 and cysteine 61 together coordinate phycourobilin. At asparagine 72 the chain carries N4-methylasparagine. Residues cysteine 82 and cysteine 158 each contribute to the (2R,3E)-phycoerythrobilin site.

Belongs to the phycobiliprotein family. Heteromer of 6 alpha, 6 beta and one gamma chain. In terms of processing, contains two covalently linked phycoerythrobilin chromophores and one covalently linked phycourobilin chromophore.

Its subcellular location is the plastid. The protein resides in the chloroplast thylakoid membrane. Light-harvesting photosynthetic bile pigment-protein from the phycobiliprotein complex. The polypeptide is B-phycoerythrin beta chain (cpeB) (Porphyridium purpureum (Red alga)).